The following is a 237-amino-acid chain: Ribonuclease PH (237 aa).

Residues R86 and 124–126 (GTR) each bind phosphate.

It belongs to the RNase PH family. As to quaternary structure, homohexameric ring arranged as a trimer of dimers.

The enzyme catalyses tRNA(n+1) + phosphate = tRNA(n) + a ribonucleoside 5'-diphosphate. Its function is as follows. Phosphorolytic 3'-5' exoribonuclease that plays an important role in tRNA 3'-end maturation. Removes nucleotide residues following the 3'-CCA terminus of tRNAs; can also add nucleotides to the ends of RNA molecules by using nucleoside diphosphates as substrates, but this may not be physiologically important. Probably plays a role in initiation of 16S rRNA degradation (leading to ribosome degradation) during starvation. The sequence is that of Ribonuclease PH from Methylocella silvestris (strain DSM 15510 / CIP 108128 / LMG 27833 / NCIMB 13906 / BL2).